The chain runs to 149 residues: MTEWEHVNKVWAVVEPDIPAVGLAILLRLFKEHKETKDLFPKFKEIPVQQLGNNEDLRKHGVTVLRALGNILKQKGKHSTNVKELADTHINKHKIPPKNFVLITNIAVKVLTEMYPSDMTGPMQESFSKVFTVICSDLETLYKEANFQG.

Thr-2 bears the N-acetylthreonine mark. Residues 2 to 143 form the Globin domain; that stretch reads TEWEHVNKVW…ICSDLETLYK (142 aa). His-60 is a binding site for nitrite. An O2-binding site is contributed by His-60. His-89 is a heme b binding site.

It belongs to the globin family. As to quaternary structure, monomeric.

It localises to the cytoplasm. The protein localises to the sarcoplasm. It carries out the reaction Fe(III)-heme b-[protein] + nitric oxide + H2O = Fe(II)-heme b-[protein] + nitrite + 2 H(+). It catalyses the reaction H2O2 + AH2 = A + 2 H2O. In terms of biological role, monomeric heme protein which primary function is to store oxygen and facilitate its diffusion within muscle tissues. Reversibly binds oxygen through a pentacoordinated heme iron and enables its timely and efficient release as needed during periods of heightened demand. Depending on the oxidative conditions of tissues and cells, and in addition to its ability to bind oxygen, it also has a nitrite reductase activity whereby it regulates the production of bioactive nitric oxide. Under stress conditions, like hypoxia and anoxia, it also protects cells against reactive oxygen species thanks to its pseudoperoxidase activity. The chain is Myoglobin (mb) from Heterodontus portusjacksoni (Port Jackson shark).